The sequence spans 87 residues: Beta-toxin Cn4 (87 aa).

The N-terminal stretch at 1–19 (MNSLLMITACLALVGTVWA) is a signal peptide. The LCN-type CS-alpha/beta domain maps to 20–85 (KEGYLVNSYT…VWPLKNKTCN (66 aa)). 4 disulfides stabilise this stretch: Cys-31–Cys-84, Cys-35–Cys-60, Cys-44–Cys-65, and Cys-48–Cys-67. Position 85 is an asparagine amide (Asn-85).

The protein belongs to the long (4 C-C) scorpion toxin superfamily. Sodium channel inhibitor family. Beta subfamily. In terms of tissue distribution, expressed by the venom gland.

Its subcellular location is the secreted. In terms of biological role, beta toxins bind voltage-independently at site-4 of sodium channels (Nav) and shift the voltage of activation toward more negative potentials thereby affecting sodium channel activation and promoting spontaneous and repetitive firing. This toxin affects the activation mechanism of sodium channels of squid axon. It also competes with Cn2 in rat brain synaptosomes. Is lethal to mice. The polypeptide is Beta-toxin Cn4 (Centruroides noxius (Mexican scorpion)).